The sequence spans 108 residues: Succinate dehydrogenase assembly factor 4, mitochondrial (108 aa).

The N-terminal 20 residues, 1–20 (MTPSRLPWLLSWVSATAWRA), are a transit peptide targeting the mitochondrion. The segment at 31–108 (RKTSSSQGGK…WERKGRCIDF (78 aa)) is disordered. Basic and acidic residues-rich tracts occupy residues 52-87 (KLPEGRFDAPEDSHLEKEPLEKFPDDVNPVTKEKGG) and 95-108 (RYGDWERKGRCIDF).

This sequence belongs to the SDHAF4 family. Interacts with SDHA in its FAD-bound form.

It localises to the mitochondrion matrix. Plays an essential role in the assembly of succinate dehydrogenase (SDH), an enzyme complex (also referred to as respiratory complex II) that is a component of both the tricarboxylic acid (TCA) cycle and the mitochondrial electron transport chain, and which couples the oxidation of succinate to fumarate with the reduction of ubiquinone (coenzyme Q) to ubiquinol. Binds to the flavoprotein subunit SDHA in its FAD-bound form, blocking the generation of excess reactive oxygen species (ROS) and facilitating its assembly with the iron-sulfur protein subunit SDHB into the SDH catalytic dimer. In Homo sapiens (Human), this protein is Succinate dehydrogenase assembly factor 4, mitochondrial.